A 292-amino-acid polypeptide reads, in one-letter code: Ferric aerobactin-binding protein VatD (292 aa).

An N-terminal signal peptide occupies residues 1-12 (MLSAALAFNSYA). One can recognise a Fe/B12 periplasmic-binding domain in the interval 30 to 292 (KVVALDWVLT…HITGRLTQPQ (263 aa)). Residues Trp-61, Arg-77, Tyr-118, Arg-185, Trp-213, Phe-215, Trp-269, and Phe-271 each coordinate desferrioxamine B.

The protein belongs to the bacterial solute-binding protein 8 family. The complex is composed of two ATP-binding proteins (VatC), two transmembrane proteins (VatB) and a solute-binding protein (VatD).

It localises to the periplasm. Part of the ABC transporter complex VatCDB involved in the import of iron(3+)-complexed aerobactin, a citrate-hydroxamate siderophore produced by other bacteria. Binds the iron(3+)-aerobactin complex and transfers it to the membrane-bound permease. Functions in the import of iron(3+)-complexed vulnibactin, a catecholate siderophore synthesized by V.vulnificus, in the absence of FatB. This is Ferric aerobactin-binding protein VatD from Vibrio vulnificus.